We begin with the raw amino-acid sequence, 378 residues long: Histidinol-phosphate aminotransferase (378 aa).

The tract at residues 1 to 20 (MSVSAKETQRHPARPEPRPG) is disordered. The span at 7-17 (ETQRHPARPEP) shows a compositional bias: basic and acidic residues. N6-(pyridoxal phosphate)lysine is present on K232.

It belongs to the class-II pyridoxal-phosphate-dependent aminotransferase family. Histidinol-phosphate aminotransferase subfamily. In terms of assembly, homodimer. Pyridoxal 5'-phosphate is required as a cofactor.

The catalysed reaction is L-histidinol phosphate + 2-oxoglutarate = 3-(imidazol-4-yl)-2-oxopropyl phosphate + L-glutamate. It participates in amino-acid biosynthesis; L-histidine biosynthesis; L-histidine from 5-phospho-alpha-D-ribose 1-diphosphate: step 7/9. This chain is Histidinol-phosphate aminotransferase, found in Azorhizobium caulinodans (strain ATCC 43989 / DSM 5975 / JCM 20966 / LMG 6465 / NBRC 14845 / NCIMB 13405 / ORS 571).